Consider the following 298-residue polypeptide: Junctional adhesion molecule B (298 aa).

The first 28 residues, 1-28, serve as a signal peptide directing secretion; it reads MARRSRHRLLLLLLRYLVVALGYHKAYG. Residues 29-238 are Extracellular-facing; it reads FSAPKDQQVV…RMQVDDLNIS (210 aa). One can recognise an Ig-like V-type domain in the interval 32–127; sequence PKDQQVVTAV…GQNLEEDTVT (96 aa). Disulfide bonds link Cys-50/Cys-109 and Cys-155/Cys-214. Asn-98, Asn-187, and Asn-236 each carry an N-linked (GlcNAc...) asparagine glycan. Positions 134–238 constitute an Ig-like C2-type domain; that stretch reads PAVPSCEVPS…RMQVDDLNIS (105 aa). A helical transmembrane segment spans residues 239–259; it reads GIIAAVVVVALVISVCGLGVC. Residues 260–298 lie on the Cytoplasmic side of the membrane; sequence YAQRKGYFSKETSFQKSNSSSKATTMSENDFKHTKSFII.

This sequence belongs to the immunoglobulin superfamily. Highly expressed in heart, placenta, lung, foreskin and lymph node. Prominently expressed on high endothelial venules and also present on the endothelia of other vessels (at protein level). Also expressed in the brain in the caudate nuclei.

The protein resides in the cell membrane. The protein localises to the cell junction. It is found in the tight junction. Junctional adhesion protein that mediates heterotypic cell-cell interactions with its cognate receptor JAM3 to regulate different cellular processes. Plays a role in homing and mobilization of hematopoietic stem and progenitor cells within the bone marrow. At the surface of bone marrow stromal cells, it contributes to the retention of the hematopoietic stem and progenitor cells expressing JAM3. Plays a central role in leukocytes extravasation by facilitating not only transmigration but also tethering and rolling of leukocytes along the endothelium. Tethering and rolling of leukocytes are dependent on the binding by JAM2 of the integrin alpha-4/beta-1. Plays a role in spermatogenesis where JAM2 and JAM3, which are respectively expressed by Sertoli and germ cells, mediate an interaction between both cell types and play an essential role in the anchorage of germ cells onto Sertoli cells and the assembly of cell polarity complexes during spermatid differentiation. Also functions as an inhibitory somatodendritic cue that prevents the myelination of non-axonal parts of neurons. During myogenesis, it is involved in myocyte fusion. May also play a role in angiogenesis. In Homo sapiens (Human), this protein is Junctional adhesion molecule B.